A 303-amino-acid chain; its full sequence is Diaminopimelate epimerase (303 aa).

Substrate contacts are provided by Asn15, Gln47, and Asn67. Cys76 acts as the Proton donor in catalysis. Substrate contacts are provided by residues 77–78 (GN), Asn163, Asn197, and 215–216 (ER). The active-site Proton acceptor is the Cys224. Position 225 to 226 (225 to 226 (GS)) interacts with substrate. The segment at 279 to 303 (DPATGEWSRDTQGLQGSGNADRGTA) is disordered.

This sequence belongs to the diaminopimelate epimerase family. In terms of assembly, homodimer.

The protein resides in the cytoplasm. It carries out the reaction (2S,6S)-2,6-diaminopimelate = meso-2,6-diaminopimelate. The protein operates within amino-acid biosynthesis; L-lysine biosynthesis via DAP pathway; DL-2,6-diaminopimelate from LL-2,6-diaminopimelate: step 1/1. In terms of biological role, catalyzes the stereoinversion of LL-2,6-diaminopimelate (L,L-DAP) to meso-diaminopimelate (meso-DAP), a precursor of L-lysine and an essential component of the bacterial peptidoglycan. The protein is Diaminopimelate epimerase of Brucella canis (strain ATCC 23365 / NCTC 10854 / RM-666).